A 244-amino-acid polypeptide reads, in one-letter code: Protein-lysine methyltransferase METTL21E (244 aa).

A disordered region spans residues 1-20; that stretch reads MDLTVTHITHKETYKEPRDD. Over residues 9–18 the composition is skewed to basic and acidic residues; that stretch reads THKETYKEPR. Residues W69, 97 to 99, D118, W149, and A170 each bind S-adenosyl-L-methionine; that span reads GAG.

The protein belongs to the methyltransferase superfamily. METTL21 family.

Functionally, protein-lysine methyltransferase. This is Protein-lysine methyltransferase METTL21E (Mettl21e) from Mus musculus (Mouse).